The primary structure comprises 182 residues: NADH-quinone oxidoreductase subunit B (182 aa).

[4Fe-4S] cluster is bound by residues Cys47, Cys48, Cys113, and Cys142.

This sequence belongs to the complex I 20 kDa subunit family. In terms of assembly, NDH-1 is composed of 14 different subunits. Subunits NuoB, C, D, E, F, and G constitute the peripheral sector of the complex. The cofactor is [4Fe-4S] cluster.

The protein localises to the cell inner membrane. It carries out the reaction a quinone + NADH + 5 H(+)(in) = a quinol + NAD(+) + 4 H(+)(out). NDH-1 shuttles electrons from NADH, via FMN and iron-sulfur (Fe-S) centers, to quinones in the respiratory chain. The immediate electron acceptor for the enzyme in this species is believed to be ubiquinone. Couples the redox reaction to proton translocation (for every two electrons transferred, four hydrogen ions are translocated across the cytoplasmic membrane), and thus conserves the redox energy in a proton gradient. The protein is NADH-quinone oxidoreductase subunit B of Anaeromyxobacter dehalogenans (strain 2CP-1 / ATCC BAA-258).